Consider the following 314-residue polypeptide: MSSALPDVSVTDLTHSLSPLQWVGMQGIDLPVRIEEPTYQRELHARADVQVDLPAPHVKGIHMSRLYCLLDAWGQAAAVSPASLFALLQEMIDSHQDCGSRNARLRLDFDLLVRRPALVTEGLSGWKSYSVHVLATKVGGALNLSIEVRIGYSSTCPCSAALSRQLIEDGFLRTFKDQPLLEASAVAQWLRSNASLATPHSQRSEARVRVTVPSDAPDLGLLALIDQVEGALRTPVQTAVKRADEQAFAALNGQNLMFVEDAARRIQASLRGYRDSQVHVRHLESLHPHDASAWSAPQASAPDQQESFATGNER.

The interval 290-314 is disordered; the sequence is DASAWSAPQASAPDQQESFATGNER. The span at 291-305 shows a compositional bias: low complexity; sequence ASAWSAPQASAPDQQ.

It belongs to the GTP cyclohydrolase IV family.

It carries out the reaction GTP + H2O = 7,8-dihydroneopterin 3'-triphosphate + formate + H(+). Its pathway is cofactor biosynthesis; 7,8-dihydroneopterin triphosphate biosynthesis; 7,8-dihydroneopterin triphosphate from GTP: step 1/1. Its function is as follows. Converts GTP to 7,8-dihydroneopterin triphosphate. In Pseudomonas putida (strain ATCC 700007 / DSM 6899 / JCM 31910 / BCRC 17059 / LMG 24140 / F1), this protein is GTP cyclohydrolase FolE2.